A 720-amino-acid chain; its full sequence is Phosphoribosylformylglycinamidine synthase subunit PurL (720 aa).

His-34 is an active-site residue. Residue Tyr-37 coordinates ATP. Glu-83 is a Mg(2+) binding site. Substrate-binding positions include 84–87 (SHNH) and Arg-106. His-85 serves as the catalytic Proton acceptor. Asp-107 contacts Mg(2+). Gln-231 serves as a coordination point for substrate. Asp-259 contacts Mg(2+). Residue 303-305 (ESQ) participates in substrate binding. Asp-480 and Gly-517 together coordinate ATP. Asn-518 provides a ligand contact to Mg(2+). A substrate-binding site is contributed by Ser-520.

The protein belongs to the FGAMS family. In terms of assembly, monomer. Part of the FGAM synthase complex composed of 1 PurL, 1 PurQ and 2 PurS subunits.

It is found in the cytoplasm. The catalysed reaction is N(2)-formyl-N(1)-(5-phospho-beta-D-ribosyl)glycinamide + L-glutamine + ATP + H2O = 2-formamido-N(1)-(5-O-phospho-beta-D-ribosyl)acetamidine + L-glutamate + ADP + phosphate + H(+). It functions in the pathway purine metabolism; IMP biosynthesis via de novo pathway; 5-amino-1-(5-phospho-D-ribosyl)imidazole from N(2)-formyl-N(1)-(5-phospho-D-ribosyl)glycinamide: step 1/2. Functionally, part of the phosphoribosylformylglycinamidine synthase complex involved in the purines biosynthetic pathway. Catalyzes the ATP-dependent conversion of formylglycinamide ribonucleotide (FGAR) and glutamine to yield formylglycinamidine ribonucleotide (FGAM) and glutamate. The FGAM synthase complex is composed of three subunits. PurQ produces an ammonia molecule by converting glutamine to glutamate. PurL transfers the ammonia molecule to FGAR to form FGAM in an ATP-dependent manner. PurS interacts with PurQ and PurL and is thought to assist in the transfer of the ammonia molecule from PurQ to PurL. In Haloarcula marismortui (strain ATCC 43049 / DSM 3752 / JCM 8966 / VKM B-1809) (Halobacterium marismortui), this protein is Phosphoribosylformylglycinamidine synthase subunit PurL.